Reading from the N-terminus, the 147-residue chain is Nucleoside diphosphate kinase (147 aa).

Lysine 9, phenylalanine 57, arginine 85, threonine 91, arginine 102, and asparagine 112 together coordinate ATP. The active-site Pros-phosphohistidine intermediate is the histidine 115.

This sequence belongs to the NDK family. Homotetramer. Requires Mg(2+) as cofactor.

The protein resides in the cytoplasm. It carries out the reaction a 2'-deoxyribonucleoside 5'-diphosphate + ATP = a 2'-deoxyribonucleoside 5'-triphosphate + ADP. The enzyme catalyses a ribonucleoside 5'-diphosphate + ATP = a ribonucleoside 5'-triphosphate + ADP. Its function is as follows. Major role in the synthesis of nucleoside triphosphates other than ATP. The ATP gamma phosphate is transferred to the NDP beta phosphate via a ping-pong mechanism, using a phosphorylated active-site intermediate. This is Nucleoside diphosphate kinase from Brevibacillus brevis (strain 47 / JCM 6285 / NBRC 100599).